A 227-amino-acid chain; its full sequence is 2,3-bisphosphoglycerate-dependent phosphoglycerate mutase (227 aa).

Residues 7 to 14 (RHGQSEWN), 20 to 21 (TG), R59, 86 to 89 (ERHY), K97, 113 to 114 (RR), and 182 to 183 (GN) each bind substrate. The Tele-phosphohistidine intermediate role is filled by H8. The active-site Proton donor/acceptor is the E86.

The protein belongs to the phosphoglycerate mutase family. BPG-dependent PGAM subfamily. In terms of assembly, homodimer.

It carries out the reaction (2R)-2-phosphoglycerate = (2R)-3-phosphoglycerate. Its pathway is carbohydrate degradation; glycolysis; pyruvate from D-glyceraldehyde 3-phosphate: step 3/5. Its function is as follows. Catalyzes the interconversion of 2-phosphoglycerate and 3-phosphoglycerate. This chain is 2,3-bisphosphoglycerate-dependent phosphoglycerate mutase, found in Neisseria meningitidis serogroup C (strain 053442).